The following is a 461-amino-acid chain: Bifunctional protein GlmU (461 aa).

Residues 1-229 are pyrophosphorylase; the sequence is MNKYVVILAA…FSESLGVNDR (229 aa). UDP-N-acetyl-alpha-D-glucosamine contacts are provided by residues 8–11, K22, Q72, and 77–78; these read LAAG and GT. A Mg(2+)-binding site is contributed by D102. Residues G139, E154, N169, and N227 each contribute to the UDP-N-acetyl-alpha-D-glucosamine site. Residue N227 coordinates Mg(2+). A linker region spans residues 230-250; that stretch reads IALAQATKIMQRRINEEHMKN. The tract at residues 251–461 is N-acetyltransferase; that stretch reads GVSFIDPDTA…LPLSKDKEWE (211 aa). Positions 332 and 350 each coordinate UDP-N-acetyl-alpha-D-glucosamine. The Proton acceptor role is filled by H362. UDP-N-acetyl-alpha-D-glucosamine-binding residues include Y365 and N376. Acetyl-CoA contacts are provided by residues 385–386, A422, and R439; that span reads NY.

The protein in the N-terminal section; belongs to the N-acetylglucosamine-1-phosphate uridyltransferase family. It in the C-terminal section; belongs to the transferase hexapeptide repeat family. In terms of assembly, homotrimer. Mg(2+) serves as cofactor.

The protein resides in the cytoplasm. The enzyme catalyses alpha-D-glucosamine 1-phosphate + acetyl-CoA = N-acetyl-alpha-D-glucosamine 1-phosphate + CoA + H(+). It carries out the reaction N-acetyl-alpha-D-glucosamine 1-phosphate + UTP + H(+) = UDP-N-acetyl-alpha-D-glucosamine + diphosphate. The protein operates within nucleotide-sugar biosynthesis; UDP-N-acetyl-alpha-D-glucosamine biosynthesis; N-acetyl-alpha-D-glucosamine 1-phosphate from alpha-D-glucosamine 6-phosphate (route II): step 2/2. It functions in the pathway nucleotide-sugar biosynthesis; UDP-N-acetyl-alpha-D-glucosamine biosynthesis; UDP-N-acetyl-alpha-D-glucosamine from N-acetyl-alpha-D-glucosamine 1-phosphate: step 1/1. Its pathway is bacterial outer membrane biogenesis; LPS lipid A biosynthesis. Functionally, catalyzes the last two sequential reactions in the de novo biosynthetic pathway for UDP-N-acetylglucosamine (UDP-GlcNAc). The C-terminal domain catalyzes the transfer of acetyl group from acetyl coenzyme A to glucosamine-1-phosphate (GlcN-1-P) to produce N-acetylglucosamine-1-phosphate (GlcNAc-1-P), which is converted into UDP-GlcNAc by the transfer of uridine 5-monophosphate (from uridine 5-triphosphate), a reaction catalyzed by the N-terminal domain. This is Bifunctional protein GlmU from Lactobacillus gasseri (strain ATCC 33323 / DSM 20243 / BCRC 14619 / CIP 102991 / JCM 1131 / KCTC 3163 / NCIMB 11718 / NCTC 13722 / AM63).